A 335-amino-acid chain; its full sequence is Phosphate acyltransferase (335 aa).

This sequence belongs to the PlsX family. Homodimer. Probably interacts with PlsY.

It localises to the cytoplasm. It catalyses the reaction a fatty acyl-[ACP] + phosphate = an acyl phosphate + holo-[ACP]. The protein operates within lipid metabolism; phospholipid metabolism. Catalyzes the reversible formation of acyl-phosphate (acyl-PO(4)) from acyl-[acyl-carrier-protein] (acyl-ACP). This enzyme utilizes acyl-ACP as fatty acyl donor, but not acyl-CoA. The sequence is that of Phosphate acyltransferase from Streptococcus pyogenes serotype M18 (strain MGAS8232).